A 362-amino-acid chain; its full sequence is Heme A synthase (362 aa).

The next 5 helical transmembrane spans lie at 11 to 31 (AAIR…VLVG), 102 to 122 (VIGM…AVSG), 128 to 148 (LWLI…MVAS), 159 to 179 (VRLA…VWTL), and 198 to 218 (AWAL…VAGL). Heme is bound at residue His262. 3 helical membrane passes run 264 to 286 (MTAY…AGAG), 297 to 317 (LAAI…VVPI), and 318 to 338 (SLAL…VLQA). His323 serves as a coordination point for heme.

The protein belongs to the COX15/CtaA family. Type 2 subfamily. As to quaternary structure, interacts with CtaB. The cofactor is heme b.

The protein resides in the cell membrane. The enzyme catalyses Fe(II)-heme o + 2 A + H2O = Fe(II)-heme a + 2 AH2. It functions in the pathway porphyrin-containing compound metabolism; heme A biosynthesis; heme A from heme O: step 1/1. Functionally, catalyzes the conversion of heme O to heme A by two successive hydroxylations of the methyl group at C8. The first hydroxylation forms heme I, the second hydroxylation results in an unstable dihydroxymethyl group, which spontaneously dehydrates, resulting in the formyl group of heme A. This Bradyrhizobium sp. (strain ORS 278) protein is Heme A synthase.